Reading from the N-terminus, the 494-residue chain is Aspartyl/glutamyl-tRNA(Asn/Gln) amidotransferase subunit B (494 aa).

The tract at residues 475 to 494 (TSGRADPKATNQMLAKKLKG) is disordered.

Belongs to the GatB/GatE family. GatB subfamily. Heterotrimer of A, B and C subunits.

The enzyme catalyses L-glutamyl-tRNA(Gln) + L-glutamine + ATP + H2O = L-glutaminyl-tRNA(Gln) + L-glutamate + ADP + phosphate + H(+). The catalysed reaction is L-aspartyl-tRNA(Asn) + L-glutamine + ATP + H2O = L-asparaginyl-tRNA(Asn) + L-glutamate + ADP + phosphate + 2 H(+). Its function is as follows. Allows the formation of correctly charged Asn-tRNA(Asn) or Gln-tRNA(Gln) through the transamidation of misacylated Asp-tRNA(Asn) or Glu-tRNA(Gln) in organisms which lack either or both of asparaginyl-tRNA or glutaminyl-tRNA synthetases. The reaction takes place in the presence of glutamine and ATP through an activated phospho-Asp-tRNA(Asn) or phospho-Glu-tRNA(Gln). This Acaryochloris marina (strain MBIC 11017) protein is Aspartyl/glutamyl-tRNA(Asn/Gln) amidotransferase subunit B.